The following is a 2463-amino-acid chain: Protein TIC 214 (2463 aa).

6 helical membrane passes run valine 18 to leucine 38, phenylalanine 60 to leucine 80, isoleucine 86 to tryptophan 106, leucine 127 to methionine 147, phenylalanine 170 to tryptophan 190, and leucine 297 to tyrosine 317. Residues glutamine 326–lysine 441 adopt a coiled-coil conformation. 5 disordered regions span residues alanine 792–asparagine 841, serine 1230–lysine 1249, serine 1393–phenylalanine 1417, glutamate 2116–lysine 2136, and lysine 2162–glutamine 2187. The span at proline 794 to lysine 830 shows a compositional bias: basic residues. 3 stretches are compositionally biased toward basic and acidic residues: residues lysine 832–asparagine 841, isoleucine 1231–lysine 1249, and glutamate 1397–phenylalanine 1417. A coiled-coil region spans residues tryptophan 2049–lysine 2192. The segment covering lysine 2124 to lysine 2136 has biased composition (basic residues).

Belongs to the TIC214 family. As to quaternary structure, part of the Tic complex.

The protein resides in the plastid. The protein localises to the chloroplast inner membrane. In terms of biological role, involved in protein precursor import into chloroplasts. May be part of an intermediate translocation complex acting as a protein-conducting channel at the inner envelope. The chain is Protein TIC 214 from Oenothera elata subsp. hookeri (Hooker's evening primrose).